The following is a 336-amino-acid chain: Fimbrial adhesin PapGII (336 aa).

Positions 1-20 (MKKWFPALLFSLCVSGESSA) are cleaved as a signal peptide. 2 disulfides stabilise this stretch: cysteine 64/cysteine 138 and cysteine 217/cysteine 249. D-galactose-binding positions include glutamate 79 and 124–127 (GYKW).

It belongs to the adhesin PapG family.

Its subcellular location is the secreted. The protein resides in the fimbrium. Functionally, tip adhesin component of type P pili that plays a critical role in kidney infection through targeted interaction with the globoseries glycolipids containing the Gal-alpha(1-4)-Gal disaccharide present on uroepithelial cells. In turn, transcriptionally regulates host gene expression in kidney cells, leading to inflammatory pathway activation and renal tissue damage. Acts thereby as key determinant of invasive uropathogenic E.coli (UPEC), which cause pyelonephritis and urinary-source bacteremia. The chain is Fimbrial adhesin PapGII from Escherichia coli O6:H1 (strain CFT073 / ATCC 700928 / UPEC).